The sequence spans 304 residues: MNQNKNYRVLFSNLYKDTQIQENAKMSEHINFRVGGPVDILLTPNTKEQIVETIKICKENKIPFYVLGNGSNVLVKDSGIRGVVIKLSEFDNIVRTGNTIKAESGALLKDVSAEALKASLTGFEFACGIPGSVGGAVFMNAGAYDGEISFVIKEAEVMSEDGKIITLSKDQLELGYRTSAIMKKNYIVITATFCFESGEKDKIEGRVSELTNKREEKQPLEFPSAGSTFKRPEGHFAGKLIQDAGLKDFTLGGAAVSGKHCGFIINKSNATAKDILDLIEYVQKEVKKQFGVDLYPEVRIIGED.

The 166-residue stretch at 33–198 folds into the FAD-binding PCMH-type domain; that stretch reads RVGGPVDILL…ITATFCFESG (166 aa). R177 is a catalytic residue. Residue S227 is the Proton donor of the active site. The active site involves E297.

The protein belongs to the MurB family. The cofactor is FAD.

The protein resides in the cytoplasm. It carries out the reaction UDP-N-acetyl-alpha-D-muramate + NADP(+) = UDP-N-acetyl-3-O-(1-carboxyvinyl)-alpha-D-glucosamine + NADPH + H(+). Its pathway is cell wall biogenesis; peptidoglycan biosynthesis. Cell wall formation. This is UDP-N-acetylenolpyruvoylglucosamine reductase from Clostridium botulinum (strain Alaska E43 / Type E3).